A 205-amino-acid polypeptide reads, in one-letter code: Ephrin-A1 (205 aa).

A signal peptide spans 1-17; it reads MEFLWAPLLGLCCSLAA. An Ephrin RBD domain is found at 18–151; it reads ADRHIVFWNS…KLKVTVNGKI (134 aa). A glycan (N-linked (GlcNAc...) asparagine) is linked at Asn-26. 2 disulfides stabilise this stretch: Cys-51-Cys-92 and Cys-80-Cys-140. Ser-182 carries GPI-anchor amidated serine lipidation. The propeptide at 183–205 is removed in mature form; sequence AAPRLFPLVWAVLLLPLLLLQTQ.

This sequence belongs to the ephrin family. In terms of assembly, monomer. Homodimer. Forms heterodimers with EPHA2. Binds to the receptor tyrosine kinases EPHA2, EPHA3, EPHA4, EPHA5, EPHA6 and EPHA7. Also binds with low affinity to EPHA1. Post-translationally, undergoes proteolysis by a metalloprotease to give rise to a soluble monomeric form. In terms of processing, N-Glycosylation is required for binding to EPHA2 receptor and inducing its internalization.

It localises to the cell membrane. The protein localises to the secreted. Functionally, cell surface GPI-bound ligand for Eph receptors, a family of receptor tyrosine kinases which are crucial for migration, repulsion and adhesion during neuronal, vascular and epithelial development. Binds promiscuously Eph receptors residing on adjacent cells, leading to contact-dependent bidirectional signaling into neighboring cells. Plays an important role in angiogenesis and tumor neovascularization. The recruitment of VAV2, VAV3 and PI3-kinase p85 subunit by phosphorylated EPHA2 is critical for EFNA1-induced RAC1 GTPase activation and vascular endothelial cell migration and assembly. Exerts anti-oncogenic effects in tumor cells through activation and down-regulation of EPHA2. Activates EPHA2 by inducing tyrosine phosphorylation which leads to its internalization and degradation. Acts as a negative regulator in the tumorigenesis of gliomas by down-regulating EPHA2 and FAK. Can evoke collapse of embryonic neuronal growth cone and regulates dendritic spine morphogenesis. This is Ephrin-A1 (Efna1) from Rattus norvegicus (Rat).